A 484-amino-acid chain; its full sequence is tRNA sulfurtransferase (484 aa).

A THUMP domain is found at 63-167 (REMIERLTCT…DQRLYVIHNQ (105 aa)). ATP-binding positions include 185 to 186 (LM), K267, G289, and Q298. A disulfide bridge connects residues C346 and C457. The 79-residue stretch at 405–483 (ALPGQIVIDI…GHANVRVYRP (79 aa)) folds into the Rhodanese domain. C457 serves as the catalytic Cysteine persulfide intermediate.

It belongs to the ThiI family.

Its subcellular location is the cytoplasm. The enzyme catalyses [ThiI sulfur-carrier protein]-S-sulfanyl-L-cysteine + a uridine in tRNA + 2 reduced [2Fe-2S]-[ferredoxin] + ATP + H(+) = [ThiI sulfur-carrier protein]-L-cysteine + a 4-thiouridine in tRNA + 2 oxidized [2Fe-2S]-[ferredoxin] + AMP + diphosphate. The catalysed reaction is [ThiS sulfur-carrier protein]-C-terminal Gly-Gly-AMP + S-sulfanyl-L-cysteinyl-[cysteine desulfurase] + AH2 = [ThiS sulfur-carrier protein]-C-terminal-Gly-aminoethanethioate + L-cysteinyl-[cysteine desulfurase] + A + AMP + 2 H(+). It participates in cofactor biosynthesis; thiamine diphosphate biosynthesis. Catalyzes the ATP-dependent transfer of a sulfur to tRNA to produce 4-thiouridine in position 8 of tRNAs, which functions as a near-UV photosensor. Also catalyzes the transfer of sulfur to the sulfur carrier protein ThiS, forming ThiS-thiocarboxylate. This is a step in the synthesis of thiazole, in the thiamine biosynthesis pathway. The sulfur is donated as persulfide by IscS. The protein is tRNA sulfurtransferase of Pseudomonas putida (strain ATCC 47054 / DSM 6125 / CFBP 8728 / NCIMB 11950 / KT2440).